Reading from the N-terminus, the 570-residue chain is Pyruvate decarboxylase (570 aa).

Residues 1-2 constitute a propeptide, removed in mature form; sequence MV. Substrate is bound by residues D33 and H120. A thiamine pyrophosphate binding region spans residues 394–476; that stretch reads DSWFNGIQLK…MLINNRGYTI (83 aa). Positions 444, 471, and 473 each coordinate Mg(2+). Residue E477 participates in substrate binding.

Belongs to the TPP enzyme family. In terms of assembly, homomer. It depends on a metal cation as a cofactor. Thiamine diphosphate serves as cofactor.

It is found in the cytoplasm. The catalysed reaction is a 2-oxocarboxylate + H(+) = an aldehyde + CO2. It functions in the pathway carbohydrate metabolism; pyruvate metabolism. This chain is Pyruvate decarboxylase (cfp), found in Neurospora crassa (strain ATCC 24698 / 74-OR23-1A / CBS 708.71 / DSM 1257 / FGSC 987).